Reading from the N-terminus, the 305-residue chain is Ribosomal RNA small subunit methyltransferase H (305 aa).

S-adenosyl-L-methionine contacts are provided by residues 47 to 49, Asp66, Phe93, Asp108, and Gln115; that span reads GGH. The disordered stretch occupies residues 280–305; that stretch reads ASAEEQERNPRSRSAKLRIARKRSES. Positions 290–305 are enriched in basic residues; that stretch reads RSRSAKLRIARKRSES.

This sequence belongs to the methyltransferase superfamily. RsmH family.

The protein resides in the cytoplasm. It carries out the reaction cytidine(1402) in 16S rRNA + S-adenosyl-L-methionine = N(4)-methylcytidine(1402) in 16S rRNA + S-adenosyl-L-homocysteine + H(+). Its function is as follows. Specifically methylates the N4 position of cytidine in position 1402 (C1402) of 16S rRNA. This is Ribosomal RNA small subunit methyltransferase H from Synechococcus sp. (strain WH7803).